We begin with the raw amino-acid sequence, 194 residues long: Anthranilate synthase component 2 (194 aa).

Positions 2–194 (KIFFIDNFDS…QSVGFLRELS (193 aa)) constitute a Glutamine amidotransferase type-1 domain. L-glutamine is bound at residue 57-59 (GPG). Cysteine 84 (nucleophile; for GATase activity) is an active-site residue. L-glutamine-binding positions include glutamine 88 and 134-135 (SL). Catalysis depends on for GATase activity residues histidine 170 and glutamate 172.

In terms of assembly, heterotetramer consisting of two non-identical subunits: a beta subunit (TrpG) and a large alpha subunit (TrpE).

It catalyses the reaction chorismate + L-glutamine = anthranilate + pyruvate + L-glutamate + H(+). The protein operates within amino-acid biosynthesis; L-tryptophan biosynthesis; L-tryptophan from chorismate: step 1/5. Functionally, part of a heterotetrameric complex that catalyzes the two-step biosynthesis of anthranilate, an intermediate in the biosynthesis of L-tryptophan. In the first step, the glutamine-binding beta subunit (TrpG) of anthranilate synthase (AS) provides the glutamine amidotransferase activity which generates ammonia as a substrate that, along with chorismate, is used in the second step, catalyzed by the large alpha subunit of AS (TrpE) to produce anthranilate. In the absence of TrpG, TrpE can synthesize anthranilate directly from chorismate and high concentrations of ammonia. This Helicobacter pylori (strain J99 / ATCC 700824) (Campylobacter pylori J99) protein is Anthranilate synthase component 2 (trpG).